A 642-amino-acid chain; its full sequence is Mediator of RNA polymerase II transcription subunit 17 (642 aa).

Residues 210–232 (AEETGDEDTASSSNSSSSVSGNN) form a disordered region. Low complexity predominate over residues 220 to 232 (SSSNSSSSVSGNN).

The protein belongs to the Mediator complex subunit 17 family. In terms of assembly, component of the Mediator complex, which includes at least CDK8, MED4, MED6, MED11, MED14, MED17, MED18, MED20, MED21, MED22, MED27, MED28, MED30 and MED31. Interacts with Hsf.

The protein resides in the nucleus. It is found in the chromosome. In terms of biological role, component of the Mediator complex, a coactivator involved in the regulated transcription of nearly all RNA polymerase II-dependent genes. Mediator functions as a bridge to convey information from gene-specific regulatory proteins to the basal RNA polymerase II transcription machinery. Mediator is recruited to promoters by direct interactions with regulatory proteins and serves as a scaffold for the assembly of a functional preinitiation complex with RNA polymerase II and the general transcription factors. Required for activated transcription of the MtnA, MtnB and MtnD genes. Negatively regulates sex comb development. The chain is Mediator of RNA polymerase II transcription subunit 17 (MED17) from Drosophila melanogaster (Fruit fly).